The primary structure comprises 134 residues: Lymphocyte antigen 6I (134 aa).

An N-terminal signal peptide occupies residues M1–A21. The 79-residue stretch at L27–N105 folds into the UPAR/Ly6 domain. 5 disulfides stabilise this stretch: C29–C53, C32–C41, C46–C74, C78–C98, and C99–C104. N-linked (GlcNAc...) asparagine glycosylation is present at N95. G112 carries GPI-anchor amidated glycine lipidation. Positions S113–M134 are cleaved as a propeptide — removed in mature form.

In terms of tissue distribution, expressed in hematopoietic tissue (spleen, thymus, bone marrow). Also found in peritoneal macrophages, peripheral blood leukocytes, liver, heart, brain, kidney and lung.

Its subcellular location is the cell membrane. This chain is Lymphocyte antigen 6I (Ly6i), found in Mus musculus (Mouse).